Consider the following 143-residue polypeptide: Large ribosomal subunit protein uL11 (143 aa).

It belongs to the universal ribosomal protein uL11 family. In terms of assembly, part of the ribosomal stalk of the 50S ribosomal subunit. Interacts with L10 and the large rRNA to form the base of the stalk. L10 forms an elongated spine to which L12 dimers bind in a sequential fashion forming a multimeric L10(L12)X complex. One or more lysine residues are methylated.

Its function is as follows. Forms part of the ribosomal stalk which helps the ribosome interact with GTP-bound translation factors. This Rhizorhabdus wittichii (strain DSM 6014 / CCUG 31198 / JCM 15750 / NBRC 105917 / EY 4224 / RW1) (Sphingomonas wittichii) protein is Large ribosomal subunit protein uL11.